The primary structure comprises 205 residues: Large ribosomal subunit protein uL4 (205 aa).

The segment covering 43 to 60 (ARSGNRAQQTRAEVSAST) has biased composition (polar residues). A disordered region spans residues 43–96 (ARSGNRAQQTRAEVSASTHKPWRQKGTGRARSGRASSPIWRGGGVTFPNKPNEN). Over residues 62 to 74 (KPWRQKGTGRARS) the composition is skewed to basic residues.

This sequence belongs to the universal ribosomal protein uL4 family. In terms of assembly, part of the 50S ribosomal subunit.

In terms of biological role, one of the primary rRNA binding proteins, this protein initially binds near the 5'-end of the 23S rRNA. It is important during the early stages of 50S assembly. It makes multiple contacts with different domains of the 23S rRNA in the assembled 50S subunit and ribosome. Its function is as follows. Forms part of the polypeptide exit tunnel. The polypeptide is Large ribosomal subunit protein uL4 (Thiobacillus denitrificans (strain ATCC 25259 / T1)).